Reading from the N-terminus, the 256-residue chain is Trans-aconitate 2-methyltransferase (256 aa).

This sequence belongs to the methyltransferase superfamily. Tam family.

It localises to the cytoplasm. It carries out the reaction trans-aconitate + S-adenosyl-L-methionine = (E)-3-(methoxycarbonyl)pent-2-enedioate + S-adenosyl-L-homocysteine. Its function is as follows. Catalyzes the S-adenosylmethionine monomethyl esterification of trans-aconitate. The chain is Trans-aconitate 2-methyltransferase from Rhizobium rhizogenes (strain K84 / ATCC BAA-868) (Agrobacterium radiobacter).